The sequence spans 300 residues: uncharacterized protein (300 aa).

2 disordered regions span residues 167 to 186 and 224 to 244; these read DVFL…HHEH and ADGS…DASH. Over residues 224-236 the composition is skewed to polar residues; it reads ADGSSLETSSMSS.

This is an uncharacterized protein from Rattus norvegicus (Rat).